Reading from the N-terminus, the 172-residue chain is Large ribosomal subunit protein uL10 (172 aa).

This sequence belongs to the universal ribosomal protein uL10 family. Part of the ribosomal stalk of the 50S ribosomal subunit. The N-terminus interacts with L11 and the large rRNA to form the base of the stalk. The C-terminus forms an elongated spine to which L12 dimers bind in a sequential fashion forming a multimeric L10(L12)X complex.

Forms part of the ribosomal stalk, playing a central role in the interaction of the ribosome with GTP-bound translation factors. The protein is Large ribosomal subunit protein uL10 of Afipia carboxidovorans (strain ATCC 49405 / DSM 1227 / KCTC 32145 / OM5) (Oligotropha carboxidovorans).